The following is an 888-amino-acid chain: Leucine--tRNA ligase (888 aa).

The short motif at 43–53 (PYPSGRIHMGH) is the 'HIGH' region element. Residues 644–648 (KMSKS) carry the 'KMSKS' region motif. An ATP-binding site is contributed by Lys-647.

This sequence belongs to the class-I aminoacyl-tRNA synthetase family.

The protein resides in the cytoplasm. It carries out the reaction tRNA(Leu) + L-leucine + ATP = L-leucyl-tRNA(Leu) + AMP + diphosphate. This Rhodopseudomonas palustris (strain BisA53) protein is Leucine--tRNA ligase.